The following is a 277-amino-acid chain: Shikimate dehydrogenase (NADP(+)) (277 aa).

Residues serine 15 to serine 17 and threonine 62 each bind shikimate. Lysine 66 serves as the catalytic Proton acceptor. The shikimate site is built by asparagine 87 and aspartate 102. NADP(+)-binding positions include glycine 127–alanine 131, asparagine 151–lysine 156, and isoleucine 219. Shikimate is bound at residue tyrosine 221. Glycine 242 serves as a coordination point for NADP(+).

This sequence belongs to the shikimate dehydrogenase family. In terms of assembly, homodimer.

The enzyme catalyses shikimate + NADP(+) = 3-dehydroshikimate + NADPH + H(+). It participates in metabolic intermediate biosynthesis; chorismate biosynthesis; chorismate from D-erythrose 4-phosphate and phosphoenolpyruvate: step 4/7. Its function is as follows. Involved in the biosynthesis of the chorismate, which leads to the biosynthesis of aromatic amino acids. Catalyzes the reversible NADPH linked reduction of 3-dehydroshikimate (DHSA) to yield shikimate (SA). This is Shikimate dehydrogenase (NADP(+)) from Bacillus mycoides (strain KBAB4) (Bacillus weihenstephanensis).